The following is a 76-amino-acid chain: Putative cation transport regulator ChaB (76 aa).

This sequence belongs to the ChaB family. Monomer.

In terms of biological role, might be a regulator of the sodium-potassium/proton antiporter ChaA. This Escherichia coli O157:H7 protein is Putative cation transport regulator ChaB.